The sequence spans 540 residues: Chaperonin GroEL 2/3 (540 aa).

Residues 30 to 33 (TLGP), K51, 87 to 91 (DGTTT), G415, 479 to 481 (NAA), and D495 each bind ATP.

Belongs to the chaperonin (HSP60) family. As to quaternary structure, forms a cylinder of 14 subunits composed of two heptameric rings stacked back-to-back. Interacts with the co-chaperonin GroES.

It localises to the cytoplasm. It catalyses the reaction ATP + H2O + a folded polypeptide = ADP + phosphate + an unfolded polypeptide.. Its function is as follows. Together with its co-chaperonin GroES, plays an essential role in assisting protein folding. The GroEL-GroES system forms a nano-cage that allows encapsulation of the non-native substrate proteins and provides a physical environment optimized to promote and accelerate protein folding. The sequence is that of Chaperonin GroEL 2/3 from Paraburkholderia xenovorans (strain LB400).